The following is a 666-amino-acid chain: Vicilin-like antimicrobial peptides 2-2 (666 aa).

An N-terminal signal peptide occupies residues M1 to A27. Disordered regions lie at residues Q161 to Q191 and R221 to P251. Positions R239–P251 are enriched in basic and acidic residues. Cupin type-1 domains are found at residues S271–R410 and Y455–E625.

This sequence belongs to the 7S seed storage protein family.

It localises to the secreted. In terms of biological role, antimicrobial peptides 2b, 2c and 2d have antibacterial and antifungal activity against a range of species. In Macadamia integrifolia (Macadamia nut), this protein is Vicilin-like antimicrobial peptides 2-2.